Consider the following 748-residue polypeptide: MLETNNHTNAWQGFKTGRWNKNIDVREFIQLNYSLYEGDDEFLEGPTKATETLWDQVMQLSKEERERGGMWDMDTKVASTITSHDAGYLDKDLEKVVGVQTEKPFKRSMQPFGGIRMAKAACEAYGYELDPETEKIFTEYRKTHNQGVFDAYSREMLNCRKAGIITGLPDAYGRGRIIGDYRRVALYGVDFLMEQKLKDFNTMSTEMSEDVIRLREELSEQYRSLQDLKELGQKYGFDISRPATNFKEAVQWLYLAYLAAIKEQNGAAMSLGRTSTFLDIYAERDLQNGDITEQEVQEIIDHFIMKLRIVKFARTPEYNELFSGDPTWVTESIGGVGIDGRPMVTKNSFRFLHSLDNLGPAPEPNLTVLWSTRLPENFKIYCAKMSIKTSSIQYENDDLMRESYGDDYGIACCVSAMKIGKQMQFFGARANLAKALLYAINGGKDEKSGKQVGPSYEGIKSDVLDYDEVFERYEKMMDWLAGVYINSLNIIHYMHDKYSYERLEMALHDTEIIRTMATGIAGLSVAADSLSAIKYAQVKPIRNEEGLVTDFEIEGDFPKYGNNDSRVDEIAVDLVERFMTKLRSHKTYRNSEHTMSVLTITSNVVYGKKTGNTPDGRKAGEPFAPGANPMHGRDQKGALSSLSSVAKIPYDCCKDGISNTFSIVPKSLGKEEVDQNKNLTSMLDGYAMQHGHHLNINVFNRETLIDAMEHPEEYPQLTIRVSGYAVNFIKLTREQQLDVISRTFHESM.

Residues 5-618 (NNHTNAWQGF…KTGNTPDGRK (614 aa)) form the PFL domain. Cys-412 acts as the S-acetylcysteine intermediate in catalysis. Catalysis depends on Cys-413, which acts as the Cysteine radical intermediate. Residues 625–748 (PGANPMHGRD…VISRTFHESM (124 aa)) enclose the Glycine radical domain. Gly-723 carries the post-translational modification Glycine radical.

This sequence belongs to the glycyl radical enzyme (GRE) family. PFL subfamily. Homodimer.

Its subcellular location is the cytoplasm. The catalysed reaction is formate + acetyl-CoA = pyruvate + CoA. It functions in the pathway fermentation; pyruvate fermentation; formate from pyruvate: step 1/1. Catalyzes the conversion of pyruvate to formate and acetyl-CoA. The chain is Formate acetyltransferase (pflB) from Staphylococcus epidermidis (strain ATCC 35984 / DSM 28319 / BCRC 17069 / CCUG 31568 / BM 3577 / RP62A).